We begin with the raw amino-acid sequence, 198 residues long: Sorcin (198 aa).

4 EF-hand domains span residues 29-64 (GQTQ…SGIA), 70-103 (FNLE…AVLN), 100-135 (AVLN…MGFR), and 134-169 (FRLS…LRAL). 10 residues coordinate Ca(2+): D83, D85, S87, T89, E94, D113, D115, S117, T119, and E124.

As to quaternary structure, homodimer. Interacts with GCA, RYR2 and ANXA7. In terms of tissue distribution, detected in cardiac myocytes.

The protein localises to the cytoplasm. Its subcellular location is the sarcoplasmic reticulum membrane. Functionally, calcium-binding protein that modulates excitation-contraction coupling in the heart. Contributes to calcium homeostasis in the heart sarcoplasmic reticulum. Modulates the activity of RYR2 calcium channels. This Homo sapiens (Human) protein is Sorcin (SRI).